The following is a 204-amino-acid chain: Guanylate kinase (204 aa).

Positions 18 to 196 (PKLFTISAPA…SYEILKSIFI (179 aa)) constitute a Guanylate kinase-like domain. An ATP-binding site is contributed by 25 to 32 (APAGAGKT).

This sequence belongs to the guanylate kinase family.

The protein localises to the cytoplasm. It carries out the reaction GMP + ATP = GDP + ADP. Functionally, essential for recycling GMP and indirectly, cGMP. In Chlamydia felis (strain Fe/C-56) (Chlamydophila felis), this protein is Guanylate kinase.